The chain runs to 99 residues: Ubiquitin-related modifier 1 (99 aa).

Gly99 is modified (1-thioglycine). A Glycyl lysine isopeptide (Gly-Lys) (interchain with K-? in acceptor proteins) cross-link involves residue Gly99.

Belongs to the URM1 family. Homodimer; homodimerization may provide an autoprotection to the highly active C-terminal residue before attacking its substrates. Interacts with NCS2 and NCS6. Forms a conjugate with the target protein AHP1. C-terminal thiocarboxylation occurs in 2 steps, it is first acyl-adenylated (-COAMP) via the hesA/moeB/thiF part of UBA4, then thiocarboxylated (-COSH) via the rhodanese domain of UBA4.

It localises to the cytoplasm. It is found in the nucleus. It functions in the pathway tRNA modification; 5-methoxycarbonylmethyl-2-thiouridine-tRNA biosynthesis. In terms of biological role, acts as a sulfur carrier required for 2-thiolation of mcm(5)S(2)U at tRNA wobble positions of cytosolic tRNA(Lys), tRNA(Glu) and tRNA(Gln). Serves as sulfur donor in tRNA 2-thiolation reaction by being thiocarboxylated (-COSH) at its C-terminus by the MOCS3 homolog UBA4. The sulfur is then transferred to tRNA to form 2-thiolation of mcm(5)S(2)U. Prior mcm(5) tRNA modification by the elongator complex is required for 2-thiolation. Also acts as a ubiquitin-like protein (UBL) that is covalently conjugated via an isopeptide bond to lysine residues of target proteins such as AHP1. The thiocarboxylated form serves as substrate for conjugation and oxidative stress specifically induces the formation of UBL-protein conjugates. The chain is Ubiquitin-related modifier 1 from Saccharomyces cerevisiae (strain RM11-1a) (Baker's yeast).